The sequence spans 250 residues: tRNA (guanine-N(1)-)-methyltransferase (250 aa).

S-adenosyl-L-methionine is bound by residues glycine 116 and isoleucine 136–leucine 141.

Belongs to the RNA methyltransferase TrmD family. In terms of assembly, homodimer.

The protein resides in the cytoplasm. It carries out the reaction guanosine(37) in tRNA + S-adenosyl-L-methionine = N(1)-methylguanosine(37) in tRNA + S-adenosyl-L-homocysteine + H(+). Specifically methylates guanosine-37 in various tRNAs. The polypeptide is tRNA (guanine-N(1)-)-methyltransferase (Pseudomonas syringae pv. tomato (strain ATCC BAA-871 / DC3000)).